A 402-amino-acid polypeptide reads, in one-letter code: Arginine biosynthesis bifunctional protein ArgJ (402 aa).

Residues Thr-152, Lys-178, Thr-189, Glu-275, Asn-397, and Thr-402 each contribute to the substrate site. Thr-189 serves as the catalytic Nucleophile.

The protein belongs to the ArgJ family. In terms of assembly, heterotetramer of two alpha and two beta chains.

The protein resides in the cytoplasm. It carries out the reaction N(2)-acetyl-L-ornithine + L-glutamate = N-acetyl-L-glutamate + L-ornithine. The enzyme catalyses L-glutamate + acetyl-CoA = N-acetyl-L-glutamate + CoA + H(+). It functions in the pathway amino-acid biosynthesis; L-arginine biosynthesis; L-ornithine and N-acetyl-L-glutamate from L-glutamate and N(2)-acetyl-L-ornithine (cyclic): step 1/1. Its pathway is amino-acid biosynthesis; L-arginine biosynthesis; N(2)-acetyl-L-ornithine from L-glutamate: step 1/4. In terms of biological role, catalyzes two activities which are involved in the cyclic version of arginine biosynthesis: the synthesis of N-acetylglutamate from glutamate and acetyl-CoA as the acetyl donor, and of ornithine by transacetylation between N(2)-acetylornithine and glutamate. The polypeptide is Arginine biosynthesis bifunctional protein ArgJ (Lactiplantibacillus plantarum (strain ATCC BAA-793 / NCIMB 8826 / WCFS1) (Lactobacillus plantarum)).